Reading from the N-terminus, the 547-residue chain is CTP synthase (547 aa).

The interval 1–265 (MARYIFITGG…DQAVLDAFDI (265 aa)) is amidoligase domain. S13 provides a ligand contact to CTP. Position 13 (S13) interacts with UTP. Residues 14–19 (SLGKGL) and D71 each bind ATP. Mg(2+) contacts are provided by D71 and E139. Residues 146 to 148 (DIE), 186 to 191 (KTKPTQ), and K222 each bind CTP. Residues 186 to 191 (KTKPTQ) and K222 each bind UTP. The Glutamine amidotransferase type-1 domain occupies 291 to 546 (KVAIVGKYTQ…IRAAKENSRL (256 aa)). G353 contributes to the L-glutamine binding site. C380 serves as the catalytic Nucleophile; for glutamine hydrolysis. L-glutamine-binding positions include 381–384 (LGMQ), E404, and R474. Active-site residues include H519 and E521.

The protein belongs to the CTP synthase family. As to quaternary structure, homotetramer.

It catalyses the reaction UTP + L-glutamine + ATP + H2O = CTP + L-glutamate + ADP + phosphate + 2 H(+). The catalysed reaction is L-glutamine + H2O = L-glutamate + NH4(+). It carries out the reaction UTP + NH4(+) + ATP = CTP + ADP + phosphate + 2 H(+). The protein operates within pyrimidine metabolism; CTP biosynthesis via de novo pathway; CTP from UDP: step 2/2. Allosterically activated by GTP, when glutamine is the substrate; GTP has no effect on the reaction when ammonia is the substrate. The allosteric effector GTP functions by stabilizing the protein conformation that binds the tetrahedral intermediate(s) formed during glutamine hydrolysis. Inhibited by the product CTP, via allosteric rather than competitive inhibition. Functionally, catalyzes the ATP-dependent amination of UTP to CTP with either L-glutamine or ammonia as the source of nitrogen. Regulates intracellular CTP levels through interactions with the four ribonucleotide triphosphates. This is CTP synthase from Roseobacter denitrificans (strain ATCC 33942 / OCh 114) (Erythrobacter sp. (strain OCh 114)).